Consider the following 384-residue polypeptide: Flap endonuclease 1 (384 aa).

An N-domain region spans residues 1 to 105 (MGIKKLTDLI…GELAKRQARR (105 aa)). Mg(2+) is bound at residue D34. A DNA-binding site is contributed by R71. Mg(2+) is bound by residues D87, E159, E161, D180, and D182. Residues 123 to 254 (EVQKFAKRVI…KRAIELIQKH (132 aa)) are I-domain. DNA is bound at residue E159. Positions 232 and 234 each coordinate DNA. D234 lines the Mg(2+) pocket. The interaction with PCNA stretch occupies residues 338–346 (VQSRMDSFI). A disordered region spans residues 349–384 (IKKPEDPNDKKKKVTKTPSKPSAKTSKKSSSTFKRK). The span at 364–384 (KTPSKPSAKTSKKSSSTFKRK) shows a compositional bias: low complexity.

Belongs to the XPG/RAD2 endonuclease family. FEN1 subfamily. In terms of assembly, interacts with PCNA. Three molecules of repg bind to one PCNA trimer with each molecule binding to one PCNA monomer. PCNA stimulates the nuclease activity without altering cleavage specificity. The cofactor is Mg(2+). Post-translationally, phosphorylated. Phosphorylation upon DNA damage induces relocalization to the nuclear plasma.

It localises to the nucleus. The protein localises to the nucleolus. Its subcellular location is the nucleoplasm. The protein resides in the mitochondrion. Structure-specific nuclease with 5'-flap endonuclease and 5'-3' exonuclease activities involved in DNA replication and repair. During DNA replication, cleaves the 5'-overhanging flap structure that is generated by displacement synthesis when DNA polymerase encounters the 5'-end of a downstream Okazaki fragment. It enters the flap from the 5'-end and then tracks to cleave the flap base, leaving a nick for ligation. Also involved in the long patch base excision repair (LP-BER) pathway, by cleaving within the apurinic/apyrimidinic (AP) site-terminated flap. Acts as a genome stabilization factor that prevents flaps from equilibrating into structures that lead to duplications and deletions. Also possesses 5'-3' exonuclease activity on nicked or gapped double-stranded DNA, and exhibits RNase H activity. Also involved in replication and repair of rDNA and in repairing mitochondrial DNA. This chain is Flap endonuclease 1, found in Dictyostelium discoideum (Social amoeba).